Consider the following 364-residue polypeptide: MQERHTEQDYRALLIADTPIIDVRAPIEFEQGAMPAAINLPLMNNDERAAVGTCYKQQGSDAALALGHKLVAGEIRQQRMDAWRAACLQNPQGILCCARGGQRSHIVQSWLHAAGIDYPLVEGGYKALRQTTIQATIELAQKPIVLIGGCTGCGKTLLVQQQPNGVDLEGLARHRGSAFGRTLQPQLSQASFENLLAAEMLKTDARQNLRLWVLEDESRMIGSNHLPECLRERMTQAAIAVVEDPFEIRLERLNEEYFLRMHHDFTHAYGDEQGWQEYCEYLHHGLSAIKRRLGLQRYNELAARLDAALTTQLATGSTDSHLAWLVPLLKEYYDPMYRYQLEKKAEKVVFRGEWAEVAEWVKAR.

The Rhodanese domain occupies 14 to 137 (LIADTPIIDV…LRQTTIQATI (124 aa)). Cys-97 serves as the catalytic S-selanylcysteine intermediate.

This sequence belongs to the SelU family. Monomer.

The catalysed reaction is 5-methylaminomethyl-2-thiouridine(34) in tRNA + selenophosphate + (2E)-geranyl diphosphate + H2O + H(+) = 5-methylaminomethyl-2-selenouridine(34) in tRNA + (2E)-thiogeraniol + phosphate + diphosphate. It carries out the reaction 5-methylaminomethyl-2-thiouridine(34) in tRNA + (2E)-geranyl diphosphate = 5-methylaminomethyl-S-(2E)-geranyl-thiouridine(34) in tRNA + diphosphate. It catalyses the reaction 5-methylaminomethyl-S-(2E)-geranyl-thiouridine(34) in tRNA + selenophosphate + H(+) = 5-methylaminomethyl-2-(Se-phospho)selenouridine(34) in tRNA + (2E)-thiogeraniol. The enzyme catalyses 5-methylaminomethyl-2-(Se-phospho)selenouridine(34) in tRNA + H2O = 5-methylaminomethyl-2-selenouridine(34) in tRNA + phosphate. Involved in the post-transcriptional modification of the uridine at the wobble position (U34) of tRNA(Lys), tRNA(Glu) and tRNA(Gln). Catalyzes the conversion of 2-thiouridine (S2U-RNA) to 2-selenouridine (Se2U-RNA). Acts in a two-step process involving geranylation of 2-thiouridine (S2U) to S-geranyl-2-thiouridine (geS2U) and subsequent selenation of the latter derivative to 2-selenouridine (Se2U) in the tRNA chain. The protein is tRNA 2-selenouridine synthase of Escherichia coli (strain 55989 / EAEC).